The following is a 136-amino-acid chain: Putative pre-16S rRNA nuclease (136 aa).

The protein belongs to the YqgF nuclease family.

Its subcellular location is the cytoplasm. Functionally, could be a nuclease involved in processing of the 5'-end of pre-16S rRNA. This chain is Putative pre-16S rRNA nuclease, found in Francisella tularensis subsp. mediasiatica (strain FSC147).